A 261-amino-acid chain; its full sequence is MASADWGYGSENGPDQWSKLYPIANGNNQSPIDIKTSEANHDSSLKPLSISYNPATAKEIVNVGHSFHVIFDDSSNQSVLKGGPLADSYRLTQFHFHWGNSNDHGSEHTVDGTRYSGELHLVHWNSAKYSSASEAISKADGLAILGVLMKVGPANPSLQKVLDALNSVKTKGKRAPFTNFDPSSLLPSSLDYWTYFGSLTHPPLHESVTWVICKDSISLSPEQLAQLRGLLSSAEGEPAVPVLSNHRPPQPLKGRTVRASF.

An N-acetylalanine modification is found at Ala-2. The region spanning 4 to 261 is the Alpha-carbonic anhydrase domain; sequence ADWGYGSENG…LKGRTVRASF (258 aa). His-65 serves as the catalytic Proton donor/acceptor. Zn(2+) contacts are provided by His-95, His-97, and His-120. Substrate contacts are provided by residues Thr-200 and 200–201; that span reads TH. Residues 239–261 are disordered; it reads AVPVLSNHRPPQPLKGRTVRASF.

Belongs to the alpha-carbonic anhydrase family. Requires Zn(2+) as cofactor.

It localises to the cytoplasm. It catalyses the reaction hydrogencarbonate + H(+) = CO2 + H2O. The catalysed reaction is urea = cyanamide + H2O. With respect to regulation, inhibited by acetazolamide. Catalyzes the reversible hydration of carbon dioxide. Can hydrate cyanamide to urea. The protein is Carbonic anhydrase 1 (Ca1) of Mus musculus (Mouse).